The following is a 279-amino-acid chain: Phosphatidylglycerol--prolipoprotein diacylglyceryl transferase (279 aa).

7 consecutive transmembrane segments (helical) span residues 22–42 (SAHW…WSSI), 58–78 (ILYF…VIFY), 89–109 (FIFK…GSII), 128–148 (FLVP…FING), 195–215 (ISQL…LNIF), 223–243 (GYMS…AEFF), and 256–276 (YISL…ILII). Arg-141 contacts a 1,2-diacyl-sn-glycero-3-phospho-(1'-sn-glycerol).

It belongs to the Lgt family.

The protein localises to the cell membrane. The catalysed reaction is L-cysteinyl-[prolipoprotein] + a 1,2-diacyl-sn-glycero-3-phospho-(1'-sn-glycerol) = an S-1,2-diacyl-sn-glyceryl-L-cysteinyl-[prolipoprotein] + sn-glycerol 1-phosphate + H(+). It functions in the pathway protein modification; lipoprotein biosynthesis (diacylglyceryl transfer). Its function is as follows. Catalyzes the transfer of the diacylglyceryl group from phosphatidylglycerol to the sulfhydryl group of the N-terminal cysteine of a prolipoprotein, the first step in the formation of mature lipoproteins. The protein is Phosphatidylglycerol--prolipoprotein diacylglyceryl transferase of Wigglesworthia glossinidia brevipalpis.